Here is a 723-residue protein sequence, read N- to C-terminus: Tripartite motif-containing protein 42 (723 aa).

The RING-type zinc finger occupies 146–192 (CPMCSRLRLHSFMLPCNHSLCEKCLRQLQKHAEVTENFFILICPVCD). 2 consecutive B box-type zinc fingers follow at residues 235–280 (PILC…FVDT) and 285–326 (QDEK…TISL). Zn(2+) contacts are provided by Cys-290, His-293, Cys-313, and His-318. Positions 382 to 407 (KLRSILQEKEKIIMEQIENLEVSRQK) form a coiled coil. The 59-residue stretch at 434–492 (LKETGQVAFLQSAKILVDQIEDGIQTTYRPDPQLRLHSINYVPLDFVELSSAIHELFPT) folds into the COS domain. In terms of domain architecture, Fibronectin type-III spans 603-701 (TPGPIVIYQT…DICKVVTPDG (99 aa)).

It belongs to the TRIM/RBCC family.

This chain is Tripartite motif-containing protein 42 (TRIM42), found in Homo sapiens (Human).